Here is a 629-residue protein sequence, read N- to C-terminus: Extracellular metalloproteinase 10 (629 aa).

An N-terminal signal peptide occupies residues 1–19; it reads MHGLLLAAGLLSLPLYTIA. A propeptide spanning residues 20 to 240 is cleaved from the precursor; it reads HTQPSGALSR…VHNVVDYVAH (221 aa). 2 N-linked (GlcNAc...) asparagine glycosylation sites follow: Asn281 and Asn331. His424 provides a ligand contact to Zn(2+). Glu425 is a catalytic residue. His428 contacts Zn(2+). 2 N-linked (GlcNAc...) asparagine glycosylation sites follow: Asn469 and Asn617.

This sequence belongs to the peptidase M36 family. Requires Zn(2+) as cofactor.

It is found in the secreted. Secreted metalloproteinase that allows assimilation of proteinaceous substrates and probably acts as a virulence factor. The protein is Extracellular metalloproteinase 10 (MEP10) of Coccidioides posadasii (strain C735) (Valley fever fungus).